The sequence spans 430 residues: Glutamate-1-semialdehyde 2,1-aminomutase (430 aa).

At K265 the chain carries N6-(pyridoxal phosphate)lysine.

It belongs to the class-III pyridoxal-phosphate-dependent aminotransferase family. HemL subfamily. Pyridoxal 5'-phosphate serves as cofactor.

The protein localises to the cytoplasm. The catalysed reaction is (S)-4-amino-5-oxopentanoate = 5-aminolevulinate. It functions in the pathway porphyrin-containing compound metabolism; protoporphyrin-IX biosynthesis; 5-aminolevulinate from L-glutamyl-tRNA(Glu): step 2/2. This is Glutamate-1-semialdehyde 2,1-aminomutase from Caldivirga maquilingensis (strain ATCC 700844 / DSM 13496 / JCM 10307 / IC-167).